A 414-amino-acid chain; its full sequence is 25-hydroxycholesterol 7-alpha-hydroxylase (414 aa).

A heme-binding site is contributed by Cys354.

Belongs to the cytochrome P450 family. Heme serves as cofactor. As to expression, highly expressed in brain; also expressed in liver and kidney.

It is found in the endoplasmic reticulum membrane. The protein localises to the microsome membrane. It carries out the reaction 25-hydroxycholesterol + reduced [NADPH--hemoprotein reductase] + O2 = 7alpha,25-dihydroxycholesterol + oxidized [NADPH--hemoprotein reductase] + H2O + H(+). It catalyses the reaction (25R)-cholest-5-ene-3beta,26-diol + reduced [NADPH--hemoprotein reductase] + O2 = (25R)-cholest-5-en-3beta,7alpha,26-triol + oxidized [NADPH--hemoprotein reductase] + H2O + H(+). It functions in the pathway lipid metabolism; bile acid biosynthesis. Functionally, oxysterol 7alpha-hydroxylase that mediates formation of 7-alpha,25-dihydroxycholesterol (7-alpha,25-OHC) from 25-hydroxycholesterol. Plays a key role in cell positioning and movement in lymphoid tissues: 7-alpha,25-dihydroxycholesterol (7-alpha,25-OHC) acts as a ligand for the G protein-coupled receptor GPR183/EBI2, a chemotactic receptor for a number of lymphoid cells. The protein is 25-hydroxycholesterol 7-alpha-hydroxylase (Cyp7b1) of Rattus norvegicus (Rat).